The chain runs to 109 residues: Ubiquitin-related modifier 1 homolog (109 aa).

G109 is modified (1-thioglycine). G109 is covalently cross-linked (Glycyl lysine isopeptide (Gly-Lys) (interchain with K-? in acceptor proteins)).

It belongs to the URM1 family. Post-translationally, C-terminal thiocarboxylation occurs in 2 steps, it is first acyl-adenylated (-COAMP) via the hesA/moeB/thiF part of the MOCS3 homolog, then thiocarboxylated (-COSH) via the rhodanese domain of the MOCS3 homolog.

Its subcellular location is the cytoplasm. It functions in the pathway tRNA modification; 5-methoxycarbonylmethyl-2-thiouridine-tRNA biosynthesis. Its function is as follows. Acts as a sulfur carrier required for 2-thiolation of mcm(5)S(2)U at tRNA wobble positions of cytosolic tRNA(Lys), tRNA(Glu) and tRNA(Gln). Serves as sulfur donor in tRNA 2-thiolation reaction by being thiocarboxylated (-COSH) at its C-terminus by MOCS3. The sulfur is then transferred to tRNA to form 2-thiolation of mcm(5)S(2)U. Also acts as a ubiquitin-like protein (UBL) that is covalently conjugated via an isopeptide bond to lysine residues of target proteins. The thiocarboxylated form serves as substrate for conjugation and oxidative stress specifically induces the formation of UBL-protein conjugates. The polypeptide is Ubiquitin-related modifier 1 homolog (Culex quinquefasciatus (Southern house mosquito)).